A 187-amino-acid chain; its full sequence is Accessory gene regulator protein B (187 aa).

The next 5 membrane-spanning stretches (helical) occupy residues 49 to 69 (IAYILNIFIFTLITNISFYLI), 82 to 102 (FWCYIESITLFIVLPLLVLHF), 107 to 127 (TLMMFLALISVGVVIKYAPAA), 143 to 163 (YFSIIISTILFIITLFVKEPY), and 164 to 184 (TQFIQLGIIIQAITLLPIYYS).

Belongs to the AgrB family.

The protein localises to the cell membrane. Its function is as follows. Essential for the production of a quorum sensing system signal molecule, the autoinducing peptide (AIP). This quorum sensing system is responsible for the regulation of the expression of virulence factor genes. Involved in the proteolytic processing of AgrD, the precursor of AIP. The protein is Accessory gene regulator protein B of Staphylococcus aureus (strain MW2).